Here is a 1510-residue protein sequence, read N- to C-terminus: Chromosome partition protein MukB (1510 aa).

The stretch at 6-30 forms a coiled coil; it reads ELENEIELESDEVIMENENVEEIVD. Position 75-82 (75-82) interacts with ATP; that stretch reads GGNGAGKS. 7 coiled-coil regions span residues 346-506, 553-611, 673-706, 821-846, 876-1064, 1094-1149, and 1249-1304; these read QHRL…HKMS, QQTP…EDIS, MQSQ…RLSQ, SAAR…AQIA, EALM…IQLQ, ERAR…RELV, and DAIE…LQNI. The tract at residues 707 to 824 is flexible hinge; sequence PDGSEDPRLN…EIPLFGSAAR (118 aa).

It belongs to the SMC family. MukB subfamily. In terms of assembly, homodimerization via its hinge domain. Binds to DNA via its C-terminal region. Interacts, and probably forms a ternary complex, with MukE and MukF via its C-terminal region. The complex formation is stimulated by calcium or magnesium. Interacts with tubulin-related protein FtsZ.

The protein localises to the cytoplasm. Its subcellular location is the nucleoid. Functionally, plays a central role in chromosome condensation, segregation and cell cycle progression. Functions as a homodimer, which is essential for chromosome partition. Involved in negative DNA supercoiling in vivo, and by this means organize and compact chromosomes. May achieve or facilitate chromosome segregation by condensation DNA from both sides of a centrally located replisome during cell division. The protein is Chromosome partition protein MukB of Haemophilus influenzae (strain PittGG).